Consider the following 88-residue polypeptide: Beta-insect excitatory toxin LqhIT1a (88 aa).

The first 18 residues, 1 to 18, serve as a signal peptide directing secretion; sequence MKFFLLFLVVLPIMGVLG. One can recognise an LCN-type CS-alpha/beta domain in the interval 20–83; it reads KNGYAVDSKG…ISGTTKKYCD (64 aa). Cystine bridges form between Cys-34/Cys-55, Cys-40/Cys-60, Cys-44/Cys-62, and Cys-56/Cys-82.

This sequence belongs to the long (4 C-C) scorpion toxin superfamily. Sodium channel inhibitor family. Beta subfamily. In terms of tissue distribution, expressed by the venom gland.

The protein resides in the secreted. Excitatory insect toxins induce a spastic paralysis. They bind voltage-independently at site-4 of sodium channels (Nav) and shift the voltage of activation toward more negative potentials thereby affecting sodium channel activation and promoting spontaneous and repetitive firing. In Leiurus hebraeus (Hebrew deathstalker scorpion), this protein is Beta-insect excitatory toxin LqhIT1a.